The following is a 264-amino-acid chain: S-adenosylmethionine decarboxylase proenzyme (264 aa).

Ser112 acts as the Schiff-base intermediate with substrate; via pyruvic acid in catalysis. Ser112 is subject to Pyruvic acid (Ser); by autocatalysis. The active-site Proton acceptor; for processing activity is the His117. Cys140 functions as the Proton donor; for catalytic activity in the catalytic mechanism.

This sequence belongs to the prokaryotic AdoMetDC family. Type 2 subfamily. Heterooctamer of four alpha and four beta chains arranged as a tetramer of alpha/beta heterodimers. Requires pyruvate as cofactor. Post-translationally, is synthesized initially as an inactive proenzyme. Formation of the active enzyme involves a self-maturation process in which the active site pyruvoyl group is generated from an internal serine residue via an autocatalytic post-translational modification. Two non-identical subunits are generated from the proenzyme in this reaction, and the pyruvate is formed at the N-terminus of the alpha chain, which is derived from the carboxyl end of the proenzyme. The post-translation cleavage follows an unusual pathway, termed non-hydrolytic serinolysis, in which the side chain hydroxyl group of the serine supplies its oxygen atom to form the C-terminus of the beta chain, while the remainder of the serine residue undergoes an oxidative deamination to produce ammonia and the pyruvoyl group blocking the N-terminus of the alpha chain.

The catalysed reaction is S-adenosyl-L-methionine + H(+) = S-adenosyl 3-(methylsulfanyl)propylamine + CO2. It functions in the pathway amine and polyamine biosynthesis; S-adenosylmethioninamine biosynthesis; S-adenosylmethioninamine from S-adenosyl-L-methionine: step 1/1. Catalyzes the decarboxylation of S-adenosylmethionine to S-adenosylmethioninamine (dcAdoMet), the propylamine donor required for the synthesis of the polyamines spermine and spermidine from the diamine putrescine. In Escherichia coli O45:K1 (strain S88 / ExPEC), this protein is S-adenosylmethionine decarboxylase proenzyme.